The sequence spans 222 residues: Protein GrpE (222 aa).

The tract at residues 1–64 (MSDQNLGQGS…GEEILSDDDL (64 aa)) is disordered. Residues 16-44 (EEPIVRDKRRIDPETGKVREPQDLSHEEL) are compositionally biased toward basic and acidic residues. The segment covering 54–64 (QGEEILSDDDL) has biased composition (acidic residues).

Belongs to the GrpE family. As to quaternary structure, homodimer.

Its subcellular location is the cytoplasm. Functionally, participates actively in the response to hyperosmotic and heat shock by preventing the aggregation of stress-denatured proteins, in association with DnaK and GrpE. It is the nucleotide exchange factor for DnaK and may function as a thermosensor. Unfolded proteins bind initially to DnaJ; upon interaction with the DnaJ-bound protein, DnaK hydrolyzes its bound ATP, resulting in the formation of a stable complex. GrpE releases ADP from DnaK; ATP binding to DnaK triggers the release of the substrate protein, thus completing the reaction cycle. Several rounds of ATP-dependent interactions between DnaJ, DnaK and GrpE are required for fully efficient folding. This Leifsonia xyli subsp. xyli (strain CTCB07) protein is Protein GrpE.